A 278-amino-acid chain; its full sequence is Pantothenate synthetase (278 aa).

M26–H33 lines the ATP pocket. The active-site Proton donor is the H33. Position 57 (Q57) interacts with (R)-pantoate. Q57 is a binding site for beta-alanine. G144 to D147 contacts ATP. Q150 contacts (R)-pantoate. Residues G173 and L181–R184 each bind ATP.

The protein belongs to the pantothenate synthetase family. Homodimer.

The protein localises to the cytoplasm. The catalysed reaction is (R)-pantoate + beta-alanine + ATP = (R)-pantothenate + AMP + diphosphate + H(+). It functions in the pathway cofactor biosynthesis; (R)-pantothenate biosynthesis; (R)-pantothenate from (R)-pantoate and beta-alanine: step 1/1. Catalyzes the condensation of pantoate with beta-alanine in an ATP-dependent reaction via a pantoyl-adenylate intermediate. This Neisseria meningitidis serogroup A / serotype 4A (strain DSM 15465 / Z2491) protein is Pantothenate synthetase.